A 1433-amino-acid polypeptide reads, in one-letter code: Regulatory protein CAT8 (1433 aa).

Polar residues predominate over residues 20–38 (GSQALSGPSISNRTSSSEA). The segment at 20–40 (GSQALSGPSISNRTSSSEANP) is disordered. Residues 70–97 (CDRCRSKKTRCDGKRPQCSQCAAVGFEC) constitute a DNA-binding region (zn(2)-C6 fungal-type). Over residues 936-946 (KPLFGSQSKNS) the composition is skewed to polar residues. Disordered stretches follow at residues 936 to 1024 (KPLF…DTKK), 1137 to 1162 (QNPE…NNLS), 1200 to 1236 (SASA…ILGS), and 1324 to 1433 (LNPT…QNAK). 2 stretches are compositionally biased toward basic and acidic residues: residues 947 to 965 (LENR…EHEY) and 994 to 1005 (LKYEKDAKRNAK). 3 stretches are compositionally biased toward polar residues: residues 1138–1162 (NPEN…NNLS), 1221–1235 (PPST…SILG), and 1326–1348 (PTDS…SNQR). Residues 1349-1362 (SLSSGNDSKGDSSS) are compositionally biased toward low complexity. 2 stretches are compositionally biased toward polar residues: residues 1363 to 1391 (QENS…SGPS) and 1418 to 1433 (SNTD…QNAK).

In terms of processing, could be the target of the SNF1/CAT1 - SNF4/CAT3 kinase complex.

The protein localises to the nucleus. In terms of biological role, activator of the gluconeogenic enzymes FBP1 and PCK1 genes. In Saccharomyces cerevisiae (strain ATCC 204508 / S288c) (Baker's yeast), this protein is Regulatory protein CAT8 (CAT8).